Here is a 329-residue protein sequence, read N- to C-terminus: Serpentine receptor class alpha-8 (329 aa).

6 helical membrane-spanning segments follow: residues 26–46 (VDLITSFFTYMLSIIAIKMVL), 60–80 (FLNIFYANLYQIVYSIDVVVI), 141–161 (IFVGSFIAIVVMISTTSTGKL), 187–207 (TIHFYISTVVSLFNLAASVAL), 231–251 (VIESTETICFLNFTQFVFMFI), and 273–293 (FWVVWCYTVPFIALTFPLLLI).

Belongs to the nematode receptor-like protein sra family.

The protein localises to the membrane. In Caenorhabditis elegans, this protein is Serpentine receptor class alpha-8 (sra-8).